A 732-amino-acid chain; its full sequence is Bromodomain-containing factor 1 (732 aa).

Residues 1–22 (MSETFPETNTPVQTPSTESFVN) show a composition bias toward polar residues. Disordered regions lie at residues 1–207 (MSET…NLPE), 324–380 (TNVA…ETKP), 491–517 (NKPVPEPTPQNSDVSDREYSSEEEDNV), 556–600 (REQQ…TPPQ), and 700–732 (VNGQQGSDNGFMKVVNQEESSEDEASSESSEEE). The span at 37-51 (SQDSDSNQQSSHQEP) shows a compositional bias: low complexity. Residues 89 to 100 (ASQTGVIQTEVS) show a composition bias toward polar residues. Over residues 137 to 147 (EAPEENPQEEV) the composition is skewed to acidic residues. The Bromo 1 domain maps to 206–315 (PENPIPQHQA…AQFEKLMVKV (110 aa)). A compositionally biased stretch (polar residues) spans 327 to 338 (AEATSVATSPTT). A compositionally biased stretch (basic and acidic residues) spans 370–380 (KSKELPYETKP). The region spanning 383–492 (KKVAAELRFC…AVFDKKWANK (110 aa)) is the Bromo 2 domain. Positions 529–569 (AIQVMENQIIRMRKELDELKKEHLKKLREQQAARKKKKQQK) form a coiled coil. Residues 561–579 (ARKKKKQQKGKRRAPKAKH) are compositionally biased toward basic residues. Pro residues predominate over residues 590-600 (PPEPPKLTPPQ). Residues 593-672 (PPKLTPPQPV…GDKALKNSAG (80 aa)) form the NET domain. Residues 718 to 732 (ESSEDEASSESSEEE) are compositionally biased toward acidic residues.

Belongs to the BET family.

It localises to the nucleus. Transcription factor involved in the expression of a broad class of genes including snRNAs. Required for sporulation and DNA-damage repair. Prevents the spreading of SIR silencing at telomeres and protects histone H4, but not H3, from deacetylation. The protein is Bromodomain-containing factor 1 (BDF1) of Candida albicans (strain SC5314 / ATCC MYA-2876) (Yeast).